We begin with the raw amino-acid sequence, 303 residues long: Ornithine carbamoyltransferase (303 aa).

Carbamoyl phosphate is bound by residues 53–56 (STRT), Gln80, Arg104, and 131–134 (HPCQ). Residues Asn162, Asp222, and 226 to 227 (SM) each bind L-ornithine. Carbamoyl phosphate contacts are provided by residues 261-262 (CL) and Arg289.

Belongs to the aspartate/ornithine carbamoyltransferase superfamily. OTCase family.

The protein resides in the cytoplasm. The catalysed reaction is carbamoyl phosphate + L-ornithine = L-citrulline + phosphate + H(+). It participates in amino-acid biosynthesis; L-arginine biosynthesis; L-arginine from L-ornithine and carbamoyl phosphate: step 1/3. Reversibly catalyzes the transfer of the carbamoyl group from carbamoyl phosphate (CP) to the N(epsilon) atom of ornithine (ORN) to produce L-citrulline. This is Ornithine carbamoyltransferase from Mesorhizobium japonicum (strain LMG 29417 / CECT 9101 / MAFF 303099) (Mesorhizobium loti (strain MAFF 303099)).